We begin with the raw amino-acid sequence, 422 residues long: UDP-N-acetylglucosamine 1-carboxyvinyltransferase (422 aa).

22–23 (KN) contributes to the phosphoenolpyruvate binding site. R95 is a UDP-N-acetyl-alpha-D-glucosamine binding site. The Proton donor role is filled by C119. 2-(S-cysteinyl)pyruvic acid O-phosphothioketal is present on C119. UDP-N-acetyl-alpha-D-glucosamine is bound by residues 124–128 (RPIDQ), D309, and V331.

It belongs to the EPSP synthase family. MurA subfamily.

The protein resides in the cytoplasm. It carries out the reaction phosphoenolpyruvate + UDP-N-acetyl-alpha-D-glucosamine = UDP-N-acetyl-3-O-(1-carboxyvinyl)-alpha-D-glucosamine + phosphate. It participates in cell wall biogenesis; peptidoglycan biosynthesis. Its function is as follows. Cell wall formation. Adds enolpyruvyl to UDP-N-acetylglucosamine. This chain is UDP-N-acetylglucosamine 1-carboxyvinyltransferase, found in Anaeromyxobacter dehalogenans (strain 2CP-1 / ATCC BAA-258).